Consider the following 217-residue polypeptide: Glycosylphosphatidylinositol anchor biosynthesis protein 11 (217 aa).

Helical transmembrane passes span 45-65 and 68-88; these read TWLT…KVFN and NTAE…IFQF. A glycan (N-linked (GlcNAc...) asparagine) is linked at asparagine 102. Transmembrane regions (helical) follow at residues 107–127, 134–154, 169–189, and 197–217; these read AISI…IILF, LLWE…PAVY, YFIL…LDWD, and IPIV…GAYL.

The protein belongs to the PIGF family.

Its subcellular location is the endoplasmic reticulum membrane. It functions in the pathway glycolipid biosynthesis; glycosylphosphatidylinositol-anchor biosynthesis. In terms of biological role, acts in the GPI biosynthetic pathway between GlcNAc-PI synthesis and GPI transfer to protein. The protein is Glycosylphosphatidylinositol anchor biosynthesis protein 11 (GPI11) of Candida glabrata (strain ATCC 2001 / BCRC 20586 / JCM 3761 / NBRC 0622 / NRRL Y-65 / CBS 138) (Yeast).